The chain runs to 308 residues: MRKLVVGSRRSKLALTQSQQFIDKLKAVEPNLEIEIKEIVTKGDRIVDKQLSKVGGKGLFVKEIQHELFEKNIDMAIHSLKDVPSVIPEGLTLGCIPDRELPFDAYISKTHTPLSQLPEGSIIGTSSLRRGAQILSKYPNLEIKWIRGNIDTRLEKLQTEDYDAIILAAAGLRRMGWSDDIVTSYLDRDTLLPAIGQGALGIECRSDDEELLTLLSKVHNDEVAKCVTAERTFLAEMDGSCQVPIAGYATISDQKEIEFTGLIMTPDGKERFEYTMNGTDPVELGKKVSNKLKEQGAYEIIKRLNEQH.

Cys241 bears the S-(dipyrrolylmethanemethyl)cysteine mark.

The protein belongs to the HMBS family. As to quaternary structure, monomer. The cofactor is dipyrromethane.

It catalyses the reaction 4 porphobilinogen + H2O = hydroxymethylbilane + 4 NH4(+). It functions in the pathway porphyrin-containing compound metabolism; protoporphyrin-IX biosynthesis; coproporphyrinogen-III from 5-aminolevulinate: step 2/4. Its function is as follows. Tetrapolymerization of the monopyrrole PBG into the hydroxymethylbilane pre-uroporphyrinogen in several discrete steps. The polypeptide is Porphobilinogen deaminase (Staphylococcus aureus (strain MRSA252)).